Reading from the N-terminus, the 357-residue chain is Alanine racemase (357 aa).

Catalysis depends on K35, which acts as the Proton acceptor; specific for D-alanine. Residue K35 is modified to N6-(pyridoxal phosphate)lysine. R130 lines the substrate pocket. The active-site Proton acceptor; specific for L-alanine is Y255. M303 is a substrate binding site.

This sequence belongs to the alanine racemase family. Pyridoxal 5'-phosphate serves as cofactor.

It catalyses the reaction L-alanine = D-alanine. It functions in the pathway amino-acid biosynthesis; D-alanine biosynthesis; D-alanine from L-alanine: step 1/1. Catalyzes the interconversion of L-alanine and D-alanine. May also act on other amino acids. This Nitrosospira multiformis (strain ATCC 25196 / NCIMB 11849 / C 71) protein is Alanine racemase (alr).